The sequence spans 619 residues: Chaperone protein DnaK (619 aa).

A Phosphothreonine; by autocatalysis modification is found at Thr-175. Residues 578–619 form a disordered region; sequence NGGAQGQGFDPNNMGGANAGAGATNNNDDNVVDADFEVQDDK. The span at 589–606 shows a compositional bias: low complexity; the sequence is NNMGGANAGAGATNNNDD. Over residues 607-619 the composition is skewed to acidic residues; it reads NVVDADFEVQDDK.

This sequence belongs to the heat shock protein 70 family.

Acts as a chaperone. This Clostridium perfringens (strain ATCC 13124 / DSM 756 / JCM 1290 / NCIMB 6125 / NCTC 8237 / Type A) protein is Chaperone protein DnaK.